The primary structure comprises 344 residues: MINEDSIQLDTLLKKYYEHSIEKIVFADDNGKIIAMNDAAKDILSEEDNYSAVANAICHRCEGYTNAYDVQSCKDCFLESMQVQATNFQVFMKTKDQKVMPFTATYQLIDQDRGIHAFTLQNVSSQIEQQEKLHQQRMMRKTISAQENERKRISRELHDSVIQEMLNVDVQLRLLKYQEDTTKLLEDAENIEYIVAKLIDDIRNMSVELRPASLDDLGLEAAFKSYFKQFEENYGIKIIYTSNIKNTRFDSDIETVVYRVVQEAILNALKYADVNEINVGIRQTGRHLVAEVIDAGNGFDPSSKPKGSGLGLYGMNERAELVSGSVNIETKIGEGTNVTLNIPI.

4 residues coordinate [4Fe-4S] cluster: Cys-58, Cys-61, Cys-73, and Cys-76. The Histidine kinase domain occupies 152–344 (RISRELHDSV…GTNVTLNIPI (193 aa)). His-158 carries the phosphohistidine; by autocatalysis modification.

[4Fe-4S] cluster is required as a cofactor. Post-translationally, autophosphorylated.

Its subcellular location is the cytoplasm. The enzyme catalyses ATP + protein L-histidine = ADP + protein N-phospho-L-histidine.. Member of the two-component regulatory system NreB/NreC involved in the control of dissimilatory nitrate/nitrite reduction in response to oxygen. NreB functions as a direct oxygen sensor histidine kinase which is autophosphorylated, in the absence of oxygen, probably at the conserved histidine residue, and transfers its phosphate group probably to a conserved aspartate residue of NreC. NreB/NreC activates the expression of the nitrate (narGHJI) and nitrite (nir) reductase operons, as well as the putative nitrate transporter gene narT. This is Oxygen sensor histidine kinase NreB (nreB) from Staphylococcus aureus (strain JH1).